The chain runs to 988 residues: Transposase for transposon Tn1546 (988 aa).

This sequence belongs to the transposase 7 family.

In terms of biological role, required for transposition of transposon Tn1546. The protein is Transposase for transposon Tn1546 of Enterococcus faecium (Streptococcus faecium).